A 389-amino-acid chain; its full sequence is Chalcone synthase 3 (389 aa).

Cys-164 is a catalytic residue.

Belongs to the thiolase-like superfamily. Chalcone/stilbene synthases family.

It carries out the reaction (E)-4-coumaroyl-CoA + 3 malonyl-CoA + 3 H(+) = 2',4,4',6'-tetrahydroxychalcone + 3 CO2 + 4 CoA. The protein operates within secondary metabolite biosynthesis; flavonoid biosynthesis. The primary product of this enzyme is 4,2',4',6'-tetrahydroxychalcone (also termed naringenin-chalcone or chalcone) which can under specific conditions spontaneously isomerize into naringenin. The sequence is that of Chalcone synthase 3 (CHS3) from Camellia sinensis (Tea plant).